The following is a 131-amino-acid chain: Hydrophilin PGA14 (131 aa).

An N-terminal signal peptide occupies residues 1 to 18 (MKFTTVATVFAISSLAAA). Composition is skewed to basic and acidic residues over residues 42–59 (YGRFDKTSRSKKPKETGT) and 79–96 (KESDLPKKRDAVVARDSK). Residues 42–110 (YGRFDKTSRS…NSTTSSGNNG (69 aa)) form a disordered region. N-linked (GlcNAc...) asparagine glycosylation is found at N97 and N101. A compositionally biased stretch (low complexity) spans 97–110 (NASSNSTTSSGNNG). The GPI-anchor amidated serine moiety is linked to residue S105. Positions 106–131 (SGNNGVATGVSLGLAGVLAVGAALVI) are cleaved as a propeptide — removed in mature form.

Belongs to the PGA14 family. In terms of processing, the GPI-anchor is attached to the protein in the endoplasmic reticulum and serves to target the protein to the cell surface. There, the glucosamine-inositol phospholipid moiety is cleaved off and the GPI-modified mannoprotein is covalently attached via its lipidless GPI glycan remnant to the 1,6-beta-glucan of the outer cell wall layer.

The protein resides in the secreted. The protein localises to the cell wall. It localises to the membrane. Functionally, hydrophilin which is essential to overcome the simple stress of the desiccation-rehydration process. The chain is Hydrophilin PGA14 (PGA14) from Candida albicans (strain SC5314 / ATCC MYA-2876) (Yeast).